A 613-amino-acid chain; its full sequence is Ectonucleoside triphosphate diphosphohydrolase 4 (613 aa).

Residues 1–33 (MGRIGISCLFPASWHFSISPVGCPRILNTNLRQ) lie on the Cytoplasmic side of the membrane. The chain crosses the membrane as a helical span at residues 34–54 (IVVISILAAAVSLLYFSVVII). Topologically, residues 55 to 559 (RSKYGWLSKD…AGHAHWRGVS (505 aa)) are lumenal. The active-site Proton acceptor is the Glu222. Residues Cys368 and Cys395 are joined by a disulfide bond. Residues Asn404 and Asn407 are each glycosylated (N-linked (GlcNAc...) asparagine). An intrachain disulfide couples Cys461 to Cys490. A helical transmembrane segment spans residues 560–580 (FVYNHYLFSGCFLVVLLSILL). The Cytoplasmic segment spans residues 581–613 (YLLRLRRIHRRAPRTGSLWMEEGLPSQKGPGPL).

This sequence belongs to the GDA1/CD39 NTPase family. Requires Ca(2+) as cofactor. It depends on Mg(2+) as a cofactor. In terms of tissue distribution, ubiquitous.

It is found in the cytoplasmic vesicle. Its subcellular location is the autophagosome membrane. The protein localises to the lysosome membrane. The protein resides in the golgi apparatus membrane. It carries out the reaction a ribonucleoside 5'-triphosphate + H2O = a ribonucleoside 5'-diphosphate + phosphate + H(+). The enzyme catalyses a ribonucleoside 5'-diphosphate + H2O = a ribonucleoside 5'-phosphate + phosphate + H(+). The catalysed reaction is UDP + H2O = UMP + phosphate + H(+). It catalyses the reaction UTP + H2O = UDP + phosphate + H(+). It carries out the reaction CTP + H2O = CDP + phosphate + H(+). The enzyme catalyses GDP + H2O = GMP + phosphate + H(+). The catalysed reaction is 5-methyl-UTP + H2O = 5-methyl-UDP + phosphate + H(+). Its function is as follows. Catalyzes the hydrolysis of nucleoside triphosphates and diphosphates in a calcium- or magnesium-dependent manner, with a preference for pyrimidines. Preferentially hydrolyzes UTP and TTP on UTP and TTP. AMP, ADP, ATP and UMP are not substrates. Preferentially activated by Ca(2+) over Mg(2+). Has a broad substrate specificity with the ability of cleaving all nucleotide di- and triphosphates with the exception of adenosine di- and triphosphate (ADP and ATP). Preferentially hydrolyzes CTP, UDP, CDP, GTP and GDP. Can use either Ca(2+) or Mg(2+) equally. This is Ectonucleoside triphosphate diphosphohydrolase 4 (Entpd4) from Mus musculus (Mouse).